The primary structure comprises 543 residues: CTP synthase (543 aa).

Residues 1-265 (MTRYIFVTGG…DDFVVERFGL (265 aa)) are amidoligase domain. Residue S13 coordinates CTP. Residue S13 participates in UTP binding. ATP is bound by residues 14–19 (SLGKGI) and D71. Positions 71 and 139 each coordinate Mg(2+). CTP contacts are provided by residues 146–148 (DIE), 186–191 (KTKPTQ), and K222. UTP-binding positions include 186 to 191 (KTKPTQ) and K222. In terms of domain architecture, Glutamine amidotransferase type-1 spans 290–541 (TIAMVGKYME…VKAALAQHQK (252 aa)). G351 contacts L-glutamine. The Nucleophile; for glutamine hydrolysis role is filled by C378. Residues 379–382 (LGMQ), E402, and R469 each bind L-glutamine. Active-site residues include H514 and E516.

The protein belongs to the CTP synthase family. In terms of assembly, homotetramer.

It catalyses the reaction UTP + L-glutamine + ATP + H2O = CTP + L-glutamate + ADP + phosphate + 2 H(+). The enzyme catalyses L-glutamine + H2O = L-glutamate + NH4(+). The catalysed reaction is UTP + NH4(+) + ATP = CTP + ADP + phosphate + 2 H(+). The protein operates within pyrimidine metabolism; CTP biosynthesis via de novo pathway; CTP from UDP: step 2/2. With respect to regulation, allosterically activated by GTP, when glutamine is the substrate; GTP has no effect on the reaction when ammonia is the substrate. The allosteric effector GTP functions by stabilizing the protein conformation that binds the tetrahedral intermediate(s) formed during glutamine hydrolysis. Inhibited by the product CTP, via allosteric rather than competitive inhibition. In terms of biological role, catalyzes the ATP-dependent amination of UTP to CTP with either L-glutamine or ammonia as the source of nitrogen. Regulates intracellular CTP levels through interactions with the four ribonucleotide triphosphates. The chain is CTP synthase from Pseudomonas syringae pv. tomato (strain ATCC BAA-871 / DC3000).